A 297-amino-acid chain; its full sequence is Bifunctional protein FolD 2 (297 aa).

Residues glycine 177–serine 179, isoleucine 202, and isoleucine 243 each bind NADP(+).

Belongs to the tetrahydrofolate dehydrogenase/cyclohydrolase family. Homodimer.

It carries out the reaction (6R)-5,10-methylene-5,6,7,8-tetrahydrofolate + NADP(+) = (6R)-5,10-methenyltetrahydrofolate + NADPH. The catalysed reaction is (6R)-5,10-methenyltetrahydrofolate + H2O = (6R)-10-formyltetrahydrofolate + H(+). Its pathway is one-carbon metabolism; tetrahydrofolate interconversion. Functionally, catalyzes the oxidation of 5,10-methylenetetrahydrofolate to 5,10-methenyltetrahydrofolate and then the hydrolysis of 5,10-methenyltetrahydrofolate to 10-formyltetrahydrofolate. The polypeptide is Bifunctional protein FolD 2 (Rhizorhabdus wittichii (strain DSM 6014 / CCUG 31198 / JCM 15750 / NBRC 105917 / EY 4224 / RW1) (Sphingomonas wittichii)).